Consider the following 131-residue polypeptide: Large ribosomal subunit protein bL20 (131 aa).

This sequence belongs to the bacterial ribosomal protein bL20 family.

Binds directly to 23S ribosomal RNA and is necessary for the in vitro assembly process of the 50S ribosomal subunit. It is not involved in the protein synthesizing functions of that subunit. The chain is Large ribosomal subunit protein bL20 from Mycolicibacterium paratuberculosis (strain ATCC BAA-968 / K-10) (Mycobacterium paratuberculosis).